The primary structure comprises 82 residues: RNA-binding protein Hfq (82 aa).

The 60-residue stretch at 10–69 (DPFLNALRREHVPVSIYLVNGIKLQGQIESFDQYVVLLRNTVTQMVYKHAISTIVPGRAV) folds into the Sm domain.

This sequence belongs to the Hfq family. As to quaternary structure, homohexamer.

In terms of biological role, RNA chaperone that binds small regulatory RNA (sRNAs) and mRNAs to facilitate mRNA translational regulation in response to envelope stress, environmental stress and changes in metabolite concentrations. Also binds with high specificity to tRNAs. In Albidiferax ferrireducens (strain ATCC BAA-621 / DSM 15236 / T118) (Rhodoferax ferrireducens), this protein is RNA-binding protein Hfq.